Reading from the N-terminus, the 840-residue chain is Leucine--tRNA ligase (840 aa).

The short motif at proline 44 to histidine 55 is the 'HIGH' region element. The 'KMSKS' region motif lies at lysine 617 to serine 621. Lysine 620 contacts ATP.

It belongs to the class-I aminoacyl-tRNA synthetase family.

It is found in the cytoplasm. It carries out the reaction tRNA(Leu) + L-leucine + ATP = L-leucyl-tRNA(Leu) + AMP + diphosphate. The protein is Leucine--tRNA ligase of Borrelia garinii subsp. bavariensis (strain ATCC BAA-2496 / DSM 23469 / PBi) (Borreliella bavariensis).